The primary structure comprises 3084 residues: Protein prune homolog 2 (3084 aa).

M1 bears the N-acetylmethionine mark. The short motif at 109-111 (GSH) is the DHH motif element. Disordered stretches follow at residues 394 to 417 (QPSSVNFIENPPELNDSNQAQADG), 430 to 465 (TIRSSRSSKESSVFLSDDSPVGDGGAPHHSLLPGFD), 500 to 536 (ASEQSQPSSHSADYSPEDDFPNSDSSEGNLSAGPKGL), 672 to 733 (EQES…QKEE), 811 to 837 (KNTWNLHPTNNETPSGQEPSEWAMGQS), 861 to 907 (EIWG…KATG), 947 to 1080 (SASN…DDPS), 1224 to 1316 (NMPS…GQSE), 1338 to 1395 (SGVN…LEVE), 1502 to 1543 (MNST…DLHD), 1600 to 1652 (GFGK…TTKR), 1776 to 1799 (ETGTMDTTWHGSASTEAKNGDPDK), 1836 to 1886 (GELE…GDKS), 1961 to 1980 (DENGCVSTGVSPTECQQENQ), 2071 to 2196 (ILTH…NPEV), 2410 to 2782 (MLLS…SHPR), 2797 to 2816 (QSEGSILSDDNLDSPDEIDI), and 2825 to 2859 (DEADSFEYTNHEDPTANKSSGQESESIPEYTAEEE). Residues 501–511 (SEQSQPSSHSA) are compositionally biased toward polar residues. Composition is skewed to basic and acidic residues over residues 682-696 (PWKDPKPEPVERRTS) and 723-733 (GNKEAQDQKEE). 2 stretches are compositionally biased toward polar residues: residues 811-828 (KNTWNLHPTNNETPSGQE) and 865-891 (KNNSSKDTSLTSGSPTSDLGQTWNNSK). Residues 962-975 (TNYSTSDSYTSPTY) show a composition bias toward low complexity. Over residues 977 to 999 (GDEKEIANKPVDKDNGFEAKDAE) the composition is skewed to basic and acidic residues. Over residues 1009 to 1019 (ATSSQQSQRNR) the composition is skewed to polar residues. The span at 1034–1063 (HTEDKPEGNDAHHPDSDALKTEHAEDKNAS) shows a compositional bias: basic and acidic residues. Residues 1071–1080 (SSPSSYDDPS) show a composition bias toward low complexity. Over residues 1248 to 1261 (SPRHSNGKDSHMLE) the composition is skewed to basic and acidic residues. Polar residues predominate over residues 1265–1294 (LSESGGLTSQPVNQDTWGDSQGDTASSVTG). Basic and acidic residues predominate over residues 1350-1366 (KPRDQEFSSSDAFEHQD). A compositionally biased stretch (low complexity) spans 1368–1378 (SSASGKISSLS). Composition is skewed to polar residues over residues 1779-1792 (TMDTTWHGSASTEA), 1854-1869 (PIQNDSEPVDTGSTNP), and 1965-1980 (CVSTGVSPTECQQENQ). The span at 2089-2103 (VCHDSEGEQKMEKHT) shows a compositional bias: basic and acidic residues. The segment covering 2162-2174 (SSKPASSRSSPEP) has biased composition (low complexity). 3 stretches are compositionally biased toward basic and acidic residues: residues 2416 to 2428 (PDHREEDKAETNI), 2506 to 2525 (KQTELEYKEEKQPEQSEDHQ), and 2535 to 2553 (SHEKDSPLKPEAREARENI). Residues 2569–2584 (PETQLSGTPDTCQSEF) are compositionally biased toward polar residues. The span at 2595–2606 (RMSSSSNHESAS) shows a compositional bias: low complexity. A compositionally biased stretch (polar residues) spans 2607-2617 (LENPAQDQSWM). Residues 2653-2664 (KGPKSQVLERNK) show a composition bias toward basic and acidic residues. Residues 2806–2816 (DNLDSPDEIDI) are compositionally biased toward acidic residues. Residues 2840–2849 (ANKSSGQESE) show a composition bias toward polar residues. The CRAL-TRIO domain occupies 2879–3040 (DMKVIEPYRR…SIIKYDEEKS (162 aa)).

Belongs to the PPase class C family. Prune subfamily.

The protein resides in the cytoplasm. In terms of biological role, may play an important role in regulating differentiation, survival and aggressiveness of the tumor cells. The polypeptide is Protein prune homolog 2 (Prune2) (Mus musculus (Mouse)).